A 485-amino-acid polypeptide reads, in one-letter code: Alpha,alpha-trehalose-phosphate synthase [UDP-forming] (485 aa).

Residues Tyr99 and Asp153 each coordinate D-glucose 6-phosphate. The UDP site is built by Arg290 and Lys295. 2 residues coordinate UDP-alpha-D-glucose: Arg290 and Lys295. Arg328 is a D-glucose 6-phosphate binding site. UDP-binding positions include Ile367 and 393-397 (LVSYE). Residues Ile367 and 389-397 (DGMNLVSYE) each bind UDP-alpha-D-glucose.

This sequence belongs to the glycosyltransferase 20 family.

It catalyses the reaction D-glucose 6-phosphate + UDP-alpha-D-glucose = alpha,alpha-trehalose 6-phosphate + UDP + H(+). It functions in the pathway carbohydrate biosynthesis. Functionally, synthase catalytic subunit of the trehalose synthase complex that catalyzes the production of trehalose from glucose-6-phosphate and UDP-alpha-D-glucose in a two step process. This Zygosaccharomyces rouxii protein is Alpha,alpha-trehalose-phosphate synthase [UDP-forming].